The following is a 435-amino-acid chain: MNHKVGFVSLGCPKALVDSERIITQLKAQGYELVPTYEDAGVVVINTCGFIDSAVQESLDTIKEAMAENGRVIVTGCLGAKADVIKNACPDVLHISGAHAYEEVVNAVHQHLPPPADPFTQLIPPQGIKLTPRHYAYLKISEGCNQKCTFCIIPTMRGKLQSYPMAQILTEAKKLKQAGVKELLVISQDTSAYGVDTRYQQVEWQGKTVNTRFYDLCEQLGELGIWVRLHYVYPYPHVDDIVPLMRDGLILPYLDIPLQHANSRILKAMKRPASSENTLLRIASWREICPDITLRSTFIVGFPGETEEEFSELLAFLKEAQLDRVGCFKYSPVEGAKANDLDNPVSEDIKEERYHRFMQVQAEISRNKLKNKIGSTQTVLIDEITEDQIIARSKSDAPEIDGLVYLPKISGITVGSFAEVVITDSDDYDLYASLV.

The MTTase N-terminal domain occupies 3–113 (HKVGFVSLGC…VVNAVHQHLP (111 aa)). C12, C48, C77, C144, C148, and C151 together coordinate [4Fe-4S] cluster. Positions 130–367 (LTPRHYAYLK…MQVQAEISRN (238 aa)) constitute a Radical SAM core domain. The 66-residue stretch at 370-435 (KNKIGSTQTV…DDYDLYASLV (66 aa)) folds into the TRAM domain.

The protein belongs to the methylthiotransferase family. RimO subfamily. The cofactor is [4Fe-4S] cluster.

Its subcellular location is the cytoplasm. The catalysed reaction is L-aspartate(89)-[ribosomal protein uS12]-hydrogen + (sulfur carrier)-SH + AH2 + 2 S-adenosyl-L-methionine = 3-methylsulfanyl-L-aspartate(89)-[ribosomal protein uS12]-hydrogen + (sulfur carrier)-H + 5'-deoxyadenosine + L-methionine + A + S-adenosyl-L-homocysteine + 2 H(+). In terms of biological role, catalyzes the methylthiolation of an aspartic acid residue of ribosomal protein uS12. This chain is Ribosomal protein uS12 methylthiotransferase RimO, found in Legionella pneumophila (strain Lens).